The primary structure comprises 723 residues: Catalase-peroxidase (723 aa).

The tryptophyl-tyrosyl-methioninium (Trp-Tyr) (with M-252) cross-link spans 98–226; sequence WHSAGSYRVG…LAAVMMGLIY (129 aa). The active-site Proton acceptor is His-99. A cross-link (tryptophyl-tyrosyl-methioninium (Tyr-Met) (with W-98)) is located at residues 226-252; that stretch reads YVNPEGVDGNPDPLKTAKDMRVTFARM. His-267 is a binding site for heme b.

This sequence belongs to the peroxidase family. Peroxidase/catalase subfamily. Homodimer or homotetramer. Heme b is required as a cofactor. Formation of the three residue Trp-Tyr-Met cross-link is important for the catalase, but not the peroxidase activity of the enzyme.

The enzyme catalyses H2O2 + AH2 = A + 2 H2O. The catalysed reaction is 2 H2O2 = O2 + 2 H2O. In terms of biological role, bifunctional enzyme with both catalase and broad-spectrum peroxidase activity. In Vibrio vulnificus (strain YJ016), this protein is Catalase-peroxidase.